Here is a 235-residue protein sequence, read N- to C-terminus: Purine nucleoside phosphorylase DeoD-type (235 aa).

His-4 serves as a coordination point for a purine D-ribonucleoside. Phosphate is bound by residues Gly-20, Arg-24, Arg-43, and 87 to 90 (RVGT). A purine D-ribonucleoside-binding positions include Glu-162, 179–181 (EME), and 203–204 (SD). The active-site Proton donor is the Asp-204.

It belongs to the PNP/UDP phosphorylase family. Homohexamer; trimer of homodimers.

The catalysed reaction is a purine D-ribonucleoside + phosphate = a purine nucleobase + alpha-D-ribose 1-phosphate. It carries out the reaction a purine 2'-deoxy-D-ribonucleoside + phosphate = a purine nucleobase + 2-deoxy-alpha-D-ribose 1-phosphate. In terms of biological role, catalyzes the reversible phosphorolytic breakdown of the N-glycosidic bond in the beta-(deoxy)ribonucleoside molecules, with the formation of the corresponding free purine bases and pentose-1-phosphate. In Bacillus cytotoxicus (strain DSM 22905 / CIP 110041 / 391-98 / NVH 391-98), this protein is Purine nucleoside phosphorylase DeoD-type.